We begin with the raw amino-acid sequence, 127 residues long: Mini-ribonuclease 3-like protein (127 aa).

The active site involves D19.

It belongs to the MrnC RNase family.

Its function is as follows. Might be a ribonuclease involved in RNA processing. The sequence is that of Mini-ribonuclease 3-like protein (mrnCL) from Ilyobacter polytropus (strain ATCC 51220 / DSM 2926 / LMG 16218 / CuHBu1).